The following is a 617-amino-acid chain: Vacuolar protein sorting-associated protein 33B (617 aa).

This sequence belongs to the STXBP/unc-18/SEC1 family. In terms of assembly, interacts with vipas39. Widely expressed from 4 hours post-fertilization (hpf) to 24 hpf. At 48 hpf, localized to brain, retina, ear, liver and proximal intestine. This expression pattern is more pronounced at 72 hpf and persists through 5 days post-fertilization (dpf). At 3 dpf and 4 dpf, expression in the liver is predominantly in developing biliary epithelial cells. No expression detected in kidney or spinal cord.

It localises to the late endosome membrane. Its subcellular location is the lysosome membrane. Its function is as follows. May play a role in vesicle-mediated protein trafficking to lysosomal compartments and in membrane docking/fusion reactions of late endosomes/lysosomes. Required for proper trafficking and targeting of the collagen-modifying enzyme lysyl hydroxylase 3 (LH3) to intracellular collagen. Mediates phagolysosomal fusion in macrophages. Proposed to be involved in endosomal maturation implicating vipas39. In epithelial cells, the vps33b:vipas39 complex may play a role in the apical recycling pathway and in the maintenance of the apical-basolateral polarity. Plays a role in bile duct development. In Danio rerio (Zebrafish), this protein is Vacuolar protein sorting-associated protein 33B.